Here is a 379-residue protein sequence, read N- to C-terminus: uncharacterized protein (379 aa).

29 to 36 (GPLNSGKT) contributes to the ATP binding site.

This sequence belongs to the archaeal ATPase family.

This is an uncharacterized protein from Methanocaldococcus jannaschii (strain ATCC 43067 / DSM 2661 / JAL-1 / JCM 10045 / NBRC 100440) (Methanococcus jannaschii).